The sequence spans 143 residues: Pollen allergen Phl p 11 (143 aa).

3 disulfide bridges follow: C14–C85, C17–C127, and C38–C73. N24 carries N-linked (GlcNAc...) asparagine glycosylation.

Belongs to the Ole e I family.

Its subcellular location is the secreted. The sequence is that of Pollen allergen Phl p 11 from Phleum pratense (Common timothy).